Reading from the N-terminus, the 386-residue chain is Succinyl-diaminopimelate desuccinylase (386 aa).

H72 serves as a coordination point for Zn(2+). D74 is an active-site residue. Residue D105 coordinates Zn(2+). E139 serves as the catalytic Proton acceptor. Zn(2+)-binding residues include E140, E168, and H353.

Belongs to the peptidase M20A family. DapE subfamily. Homodimer. Zn(2+) serves as cofactor. Co(2+) is required as a cofactor.

It catalyses the reaction N-succinyl-(2S,6S)-2,6-diaminopimelate + H2O = (2S,6S)-2,6-diaminopimelate + succinate. It functions in the pathway amino-acid biosynthesis; L-lysine biosynthesis via DAP pathway; LL-2,6-diaminopimelate from (S)-tetrahydrodipicolinate (succinylase route): step 3/3. In terms of biological role, catalyzes the hydrolysis of N-succinyl-L,L-diaminopimelic acid (SDAP), forming succinate and LL-2,6-diaminopimelate (DAP), an intermediate involved in the bacterial biosynthesis of lysine and meso-diaminopimelic acid, an essential component of bacterial cell walls. The sequence is that of Succinyl-diaminopimelate desuccinylase from Rhodospirillum centenum (strain ATCC 51521 / SW).